The sequence spans 235 residues: Protocatechuate 3,4-dioxygenase beta chain (235 aa).

Residues Y107, Y146, H159, and H161 each contribute to the Fe cation site.

It belongs to the intradiol ring-cleavage dioxygenase family. In terms of assembly, the enzyme is an oligomer of 12 copies of the alpha and beta chains. The cofactor is Fe(3+).

The enzyme catalyses 3,4-dihydroxybenzoate + O2 = 3-carboxy-cis,cis-muconate + 2 H(+). It participates in aromatic compound metabolism; beta-ketoadipate pathway; 3-carboxy-cis,cis-muconate from 3,4-dihydroxybenzoate: step 1/1. Its function is as follows. Plays an essential role in the utilization of numerous aromatic and hydroaromatic compounds via the beta-ketoadipate pathway. The sequence is that of Protocatechuate 3,4-dioxygenase beta chain (pcaH) from Burkholderia cepacia (Pseudomonas cepacia).